The following is a 193-amino-acid chain: Adenine phosphoribosyltransferase (193 aa).

Belongs to the purine/pyrimidine phosphoribosyltransferase family. As to quaternary structure, homodimer.

Its subcellular location is the cytoplasm. The catalysed reaction is AMP + diphosphate = 5-phospho-alpha-D-ribose 1-diphosphate + adenine. It functions in the pathway purine metabolism; AMP biosynthesis via salvage pathway; AMP from adenine: step 1/1. Catalyzes a salvage reaction resulting in the formation of AMP, that is energically less costly than de novo synthesis. This Bifidobacterium adolescentis (strain ATCC 15703 / DSM 20083 / NCTC 11814 / E194a) protein is Adenine phosphoribosyltransferase.